The primary structure comprises 121 residues: Small ribosomal subunit protein bS6 (121 aa).

The interval 94–121 (KAETGPSAVMKRVEKEEARKSSQQETAA) is disordered. Residues 104-115 (KRVEKEEARKSS) are compositionally biased toward basic and acidic residues.

It belongs to the bacterial ribosomal protein bS6 family.

Its function is as follows. Binds together with bS18 to 16S ribosomal RNA. In Leptothrix cholodnii (strain ATCC 51168 / LMG 8142 / SP-6) (Leptothrix discophora (strain SP-6)), this protein is Small ribosomal subunit protein bS6.